The chain runs to 126 residues: Translation initiation factor 5A (126 aa).

K36 is subject to Hypusine.

Belongs to the eIF-5A family.

The protein resides in the cytoplasm. Functionally, functions by promoting the formation of the first peptide bond. This Haloarcula marismortui (strain ATCC 43049 / DSM 3752 / JCM 8966 / VKM B-1809) (Halobacterium marismortui) protein is Translation initiation factor 5A.